The chain runs to 410 residues: WD repeat and FYVE domain-containing protein 1 (410 aa).

WD repeat units lie at residues 22 to 61 (GHQDAVTAALLIPKEDGVITASEDRTIRVWLKRDSGQYWP), 66 to 105 (TMASPCSAMAYHHDSRRIFVGQDNGAVMEFHVSEDFNKMN), 112 to 150 (AHQNRVSAIIFSLATEWVISTGHDKCVSWMCTRSGNMLG), 153 to 192 (FFTSWASCLQYDFDTQYAFVGDYSGQITLLKLEQNTCSVI), 197 to 236 (GHEGSVACLWWDPIQRLLFSGASDNSIIMWDIGGRKGRTL), and 240 to 279 (GHHDKVQSLCYLQLTRQLVSCSSDGGIAVWNMDVSREEAP). The segment at 281 to 352 (WLESDSCQKC…VCDSCYDSIK (72 aa)) adopts an FYVE-type zinc-finger fold. The Zn(2+) site is built by cysteine 287, cysteine 290, cysteine 314, cysteine 317, cysteine 322, cysteine 325, cysteine 344, and cysteine 347. The WD 7 repeat unit spans residues 364–403 (EGKHNISHMSMDIARGLMVTCGTDRIVKIWDMTPVVGCSL). Serine 408 is modified (phosphoserine).

As to quaternary structure, binds PtdIns3P in vitro with high specificity over other phosphoinositides. Interacts (via WD repeat 2) with tyrosine-phosphorylated TLR3 (via TIR domain) in response to poly(I:C). Interacts with TICAM1 in response to poly(I:C). Interacts with TLR4 in response to LPS.

The protein localises to the early endosome. Its function is as follows. Positively regulates TLR3- and TLR4-mediated signaling pathways by bridging the interaction between TLR3 or TLR4 and TICAM1. Promotes TLR3/4 ligand-induced activation of transcription factors IRF3 and NF-kappa-B, as well as the production of IFN-beta and inflammatory cytokines. The chain is WD repeat and FYVE domain-containing protein 1 (WDFY1) from Homo sapiens (Human).